The chain runs to 163 residues: Putative C-type lectin protein FPV239 (163 aa).

Positions 48 to 159 constitute a C-type lectin domain; it reads CKEGWVGYNK…CFLPKKWICR (112 aa). 2 cysteine pairs are disulfide-bonded: C76-C158 and C137-C150.

The sequence is that of Putative C-type lectin protein FPV239 from Fowlpox virus (strain NVSL) (FPV).